A 235-amino-acid chain; its full sequence is Ribonuclease PH (235 aa).

Phosphate contacts are provided by residues arginine 86 and 124-126 (GTR).

This sequence belongs to the RNase PH family. As to quaternary structure, homohexameric ring arranged as a trimer of dimers.

It carries out the reaction tRNA(n+1) + phosphate = tRNA(n) + a ribonucleoside 5'-diphosphate. Phosphorolytic 3'-5' exoribonuclease that plays an important role in tRNA 3'-end maturation. Removes nucleotide residues following the 3'-CCA terminus of tRNAs; can also add nucleotides to the ends of RNA molecules by using nucleoside diphosphates as substrates, but this may not be physiologically important. Probably plays a role in initiation of 16S rRNA degradation (leading to ribosome degradation) during starvation. The polypeptide is Ribonuclease PH (Francisella tularensis subsp. novicida (strain U112)).